Here is a 450-residue protein sequence, read N- to C-terminus: Solute carrier family 52, riboflavin transporter, member 2 (450 aa).

Transmembrane regions (helical) follow at residues L14–L34, L47–L67, I79–W99, F114–L136, and F147–V167. N178 carries N-linked (GlcNAc...) asparagine glycosylation. Residues F201 to L221 form a helical membrane-spanning segment. The tract at residues A230–S268 is disordered. The span at G242 to A252 shows a compositional bias: acidic residues. 5 helical membrane-spanning segments follow: residues A282–V302, L317–L337, L344–L364, V371–F391, and A409–F429.

Belongs to the riboflavin transporter family. As to expression, highly expressed in the placenta and small intestine, moderately in the kidney, colon, lung, prostate, uterus, and thymus, and weakly in all other tissues.

The protein localises to the cell membrane. It catalyses the reaction riboflavin(in) = riboflavin(out). With respect to regulation, riboflavin transport is Na(+)-independent but moderately pH-sensitive. Activity is strongly inhibited by riboflavin analogs, such as lumiflavin. Weakly inhibited by flavin adenine dinucleotide (FAD) and flavin mononucleotide (FMN). Plasma membrane transporter mediating the uptake by cells of the water soluble vitamin B2/riboflavin that plays a key role in biochemical oxidation-reduction reactions of the carbohydrate, lipid, and amino acid metabolism. May also act as a receptor for 4-hydroxybutyrate. The protein is Solute carrier family 52, riboflavin transporter, member 2 (Slc52a2) of Rattus norvegicus (Rat).